The sequence spans 397 residues: Phosphoglycerate kinase (397 aa).

Residues 21 to 23 (DVN), Arg-36, 59 to 62 (HFGR), Arg-119, and Arg-152 each bind substrate. ATP contacts are provided by residues Lys-202, Glu-324, and 354–357 (GGDT).

This sequence belongs to the phosphoglycerate kinase family. In terms of assembly, monomer.

The protein resides in the cytoplasm. The enzyme catalyses (2R)-3-phosphoglycerate + ATP = (2R)-3-phospho-glyceroyl phosphate + ADP. The protein operates within carbohydrate degradation; glycolysis; pyruvate from D-glyceraldehyde 3-phosphate: step 2/5. The chain is Phosphoglycerate kinase from Cereibacter sphaeroides (strain ATCC 17025 / ATH 2.4.3) (Rhodobacter sphaeroides).